A 282-amino-acid polypeptide reads, in one-letter code: Digeranylgeranylglyceryl phosphate synthase (282 aa).

9 consecutive transmembrane segments (helical) span residues Val-15–Glu-35, Leu-36–Ile-56, Val-81–Ile-100, Ile-104–Ala-121, Gly-131–Phe-151, Ile-159–Ile-179, Lys-201–Phe-221, Phe-222–Ile-242, and Tyr-260–Phe-280.

It belongs to the UbiA prenyltransferase family. DGGGP synthase subfamily. Mg(2+) is required as a cofactor. It depends on Ca(2+) as a cofactor.

It is found in the cell membrane. The enzyme catalyses sn-3-O-(geranylgeranyl)glycerol 1-phosphate + (2E,6E,10E)-geranylgeranyl diphosphate = 2,3-bis-O-(geranylgeranyl)-sn-glycerol 1-phosphate + diphosphate. Its pathway is membrane lipid metabolism; glycerophospholipid metabolism. Inhibited by EDTA in vitro. In terms of biological role, prenyltransferase that catalyzes the transfer of the geranylgeranyl moiety of geranylgeranyl diphosphate (GGPP) to the C2 hydroxyl of (S)-3-O-geranylgeranylglyceryl phosphate (GGGP). This reaction is the second ether-bond-formation step in the biosynthesis of archaeal membrane lipids. Cannot use other prenyl donors, i.e. farnesyl diphosphate (FPP) and phytyl diphosphate. Moreover, 4-hydroxybenzoate, 1,4-dihydroxy 2-naphthoate, homogentisate, and alpha-glycerophosphate do not function as prenyl acceptor substrates. The chain is Digeranylgeranylglyceryl phosphate synthase (ubiA-2) from Saccharolobus solfataricus (strain ATCC 35092 / DSM 1617 / JCM 11322 / P2) (Sulfolobus solfataricus).